The sequence spans 69 residues: Chondroitin proteoglycan 9 (69 aa).

An N-terminal signal peptide occupies residues 1-19; sequence MHLWQLVLLVILFFGAAFG. 2 O-linked (Xyl...) (chondroitin sulfate) serine glycosylation sites follow: Ser-25 and Ser-27.

This Caenorhabditis elegans protein is Chondroitin proteoglycan 9.